Consider the following 101-residue polypeptide: NAD(P)H-quinone oxidoreductase subunit 4L, chloroplastic (101 aa).

3 helical membrane passes run 2 to 22 (MLEH…YGLI), 32 to 52 (MCLE…SDLF), and 61 to 81 (IFSI…PAIV).

It belongs to the complex I subunit 4L family. In terms of assembly, NDH is composed of at least 16 different subunits, 5 of which are encoded in the nucleus.

The protein resides in the plastid. Its subcellular location is the chloroplast thylakoid membrane. The enzyme catalyses a plastoquinone + NADH + (n+1) H(+)(in) = a plastoquinol + NAD(+) + n H(+)(out). It carries out the reaction a plastoquinone + NADPH + (n+1) H(+)(in) = a plastoquinol + NADP(+) + n H(+)(out). In terms of biological role, NDH shuttles electrons from NAD(P)H:plastoquinone, via FMN and iron-sulfur (Fe-S) centers, to quinones in the photosynthetic chain and possibly in a chloroplast respiratory chain. The immediate electron acceptor for the enzyme in this species is believed to be plastoquinone. Couples the redox reaction to proton translocation, and thus conserves the redox energy in a proton gradient. This chain is NAD(P)H-quinone oxidoreductase subunit 4L, chloroplastic, found in Illicium oligandrum (Star anise).